Consider the following 942-residue polypeptide: MKIKILSAMVASSLLIGCVIPTVKASQSAIKSIETNRTITKVRTGMLSGGSSIITTSYEGTVAAYKFNGEKLWENELSGFMNHDIWVQDINGDGLVEIFAANADGNVYCINSDGSLKWTFGLNEVPMNSVTVISDADKKYVVAGGYDKNLYYISTNGELLKTIESGTYSEEGVFGDGVKPEARTHTVNFVRPVKSSDGTEKLVVLGTNNSLQSSGRFYIFEPFADLPSEKSRISIKKGIGDLRTVDFDNDGNDELTLGNSAQIGDAAISVMNLDDLSQKKSQINDIARRIDRFGYRVAQTEVVMNEGTPTYLTLFGSRILLTPESFDVNDSEILANKYSYYDMWKDKSSNKLVLASAQSGGSQVHIIDTSNPSWKSAYEELEPQGKLAAIQENTRAIERQLSNFQKPTRERAPLPVYFISESRNEIPTTIERSEFLYDSPVFLNYSTLPNVENWDRSEVLADNPKYRDKRDRRKNYTLSSEEMFNKLSAGYDNSDGISQWAGHGNDPYMISLATMKRIISSGDGKKTVNIYPEIEGHGDAFNKVLSDHFYPLAEFSSENNANLFMRNKHTFWQSTIYAPEWSELRSGRLADAFVPAMEETTDKSMEMSVAGRMGLWAAGSVDNWGERYARDNPSFDRLRQHSHQMVPNHALRQIIYKIASGARYINNFGFNQEYMSLAWELIGKGALYVPKREELLSLSPVHISMKEPDPIYRETSNNVKWTTFYDEEKDSIPYVFSRLNGTWPGAKTLPWDYSNYAADTKERRLDFIPKFPKGLVLITPVQQGKFKDEGTVRGTLADNMHPIYKDIMKEYITDGKNYYNPNGEQVMAADSVRYRQIKNKIEEKSNLLPMTVSGEAAWVVAQSAEKHLRLTLVDSGYLNPSNKVAKVKFNSVTPVAIVDVLSGETFSPDSNGVVEIPVLAGAFRFIDVKITEDLRNMQSSTL.

Positions 1-25 are cleaved as a signal peptide; that stretch reads MKIKILSAMVASSLLIGCVIPTVKA.

In terms of assembly, monomer.

Its subcellular location is the secreted. The catalysed reaction is Endohydrolysis of (1-&gt;4)-beta-linkages in the backbone of lambda-carrageenan, resulting in the tetrasaccharide alpha-D-Galp2,6S2-(1-&gt;3)-beta-D-Galp2S-(1-&gt;4)-alpha-D-Galp2,6S2-(1-&gt;3)-D-Galp2S.. Functionally, hydrolyzes lambda-carrageenan with inversion of anomeric configuration. Does not hydrolyze iota- and kappa-carrageenans, agarose or porphyran. The chain is Lambda-carrageenase from Pseudoalteromonas carrageenovora (Alteromonas carrageenovora).